The chain runs to 104 residues: Large ribosomal subunit protein bL21 (104 aa).

Belongs to the bacterial ribosomal protein bL21 family. Part of the 50S ribosomal subunit. Contacts protein L20.

In terms of biological role, this protein binds to 23S rRNA in the presence of protein L20. The polypeptide is Large ribosomal subunit protein bL21 (Nitrosococcus oceani (strain ATCC 19707 / BCRC 17464 / JCM 30415 / NCIMB 11848 / C-107)).